Here is a 164-residue protein sequence, read N- to C-terminus: Protein phosphatase 1 regulatory subunit 14C (164 aa).

Residues 1 to 19 (MSVVTGGGEAAGGGGGGGA) show a composition bias toward gly residues. Residues 1-70 (MSVVTGGGEA…QQQRRHQQGK (70 aa)) form a disordered region. S2 carries the N-acetylserine modification. S25 is modified (phosphoserine). An Omega-N-methylarginine modification is found at R27. Position 33 is a phosphoserine (S33). Low complexity predominate over residues 50–62 (VTTVAAAGQVQQQ). Residue T72 is modified to Phosphothreonine; by ILK1.

This sequence belongs to the PP1 inhibitor family. In terms of processing, the main inhibitory site appears to be Thr-72. Has over 600-fold higher inhibitory activity when phosphorylated, creating a molecular switch for regulating the phosphorylation status of PPP1CA substrates and smooth muscle contraction. Detected in heart, muscle, spinal cord, hippocampus, hypothalamus, thalamus, midbrain, brain stem, cerebellum, brain cortex and olfactory bulb.

The protein resides in the endomembrane system. Inhibitor of the PP1 regulatory subunit PPP1CA. This is Protein phosphatase 1 regulatory subunit 14C (Ppp1r14c) from Mus musculus (Mouse).